The primary structure comprises 242 residues: Small ribosomal subunit protein uS3 (242 aa).

A KH type-2 domain is found at 39–110; the sequence is IRKFIHKKYG…QVRINVVEVE (72 aa). Positions 216 to 242 are disordered; the sequence is QTMPVGANPRRRASRRPQQFEDRSNEG. Over residues 233 to 242 the composition is skewed to basic and acidic residues; sequence QQFEDRSNEG.

It belongs to the universal ribosomal protein uS3 family. In terms of assembly, part of the 30S ribosomal subunit. Forms a tight complex with proteins S10 and S14.

In terms of biological role, binds the lower part of the 30S subunit head. Binds mRNA in the 70S ribosome, positioning it for translation. The polypeptide is Small ribosomal subunit protein uS3 (Synechococcus sp. (strain CC9902)).